Reading from the N-terminus, the 540-residue chain is CTP synthase (540 aa).

Positions methionine 1–leucine 266 are amidoligase domain. Serine 14 provides a ligand contact to CTP. A UTP-binding site is contributed by serine 14. ATP contacts are provided by residues serine 15–isoleucine 20 and aspartate 72. Aspartate 72 and glutamate 140 together coordinate Mg(2+). CTP contacts are provided by residues aspartate 147–glutamate 149, lysine 187–glutamine 192, and lysine 223. Residues lysine 187–glutamine 192 and lysine 223 each bind UTP. One can recognise a Glutamine amidotransferase type-1 domain in the interval threonine 291–threonine 540. Glycine 351 lines the L-glutamine pocket. The Nucleophile; for glutamine hydrolysis role is filled by cysteine 378. L-glutamine-binding positions include leucine 379–glutamine 382, glutamate 402, and arginine 470. Catalysis depends on residues histidine 513 and glutamate 515.

The protein belongs to the CTP synthase family. Homotetramer.

The catalysed reaction is UTP + L-glutamine + ATP + H2O = CTP + L-glutamate + ADP + phosphate + 2 H(+). It catalyses the reaction L-glutamine + H2O = L-glutamate + NH4(+). The enzyme catalyses UTP + NH4(+) + ATP = CTP + ADP + phosphate + 2 H(+). It participates in pyrimidine metabolism; CTP biosynthesis via de novo pathway; CTP from UDP: step 2/2. Allosterically activated by GTP, when glutamine is the substrate; GTP has no effect on the reaction when ammonia is the substrate. The allosteric effector GTP functions by stabilizing the protein conformation that binds the tetrahedral intermediate(s) formed during glutamine hydrolysis. Inhibited by the product CTP, via allosteric rather than competitive inhibition. Catalyzes the ATP-dependent amination of UTP to CTP with either L-glutamine or ammonia as the source of nitrogen. Regulates intracellular CTP levels through interactions with the four ribonucleotide triphosphates. The polypeptide is CTP synthase (Helicobacter hepaticus (strain ATCC 51449 / 3B1)).